Here is a 715-residue protein sequence, read N- to C-terminus: Palmitoyltransferase ZDHHC5 (715 aa).

Residues 1–13 lie on the Cytoplasmic side of the membrane; the sequence is MPAESGKRFKPSK. Residues 14–34 traverse the membrane as a helical segment; sequence YVPVSAAAIFLVGATTLFFAF. At 35–52 the chain is on the extracellular side; it reads TCPGLSLNVSPAVPIYNA. A helical membrane pass occupies residues 53 to 73; that stretch reads IMFLFVLANFSMATFMDPGIF. Over 74–148 the chain is Cytoplasmic; that stretch reads PRAEEDEDKE…NCIGRRNYRY (75 aa). Tyr-91 carries the phosphotyrosine modification. In terms of domain architecture, DHHC spans 104-154; that stretch reads KWCATCRFYRPPRCSHCSVCDNCVEEFDHHCPWVNNCIGRRNYRYFFLFLL. Cys-134 serves as the catalytic S-palmitoyl cysteine intermediate. The chain crosses the membrane as a helical span at residues 149–169; sequence FFLFLLSLTAHIMGVFGFGLL. Residues 170-191 are Extracellular-facing; that stretch reads YVLYHIEELSGVRTAVTMAVMC. Residues 192 to 212 traverse the membrane as a helical segment; that stretch reads VAGLFFIPVAGLTGFHVVLVA. Over 213–715 the chain is Cytoplasmic; the sequence is RGRTTNEQVT…VGGTTYEISV (503 aa). The residue at position 247 (Ser-247) is a Phosphoserine. Residues 289-715 form a disordered region; sequence GELRRTKSKG…VGGTTYEISV (427 aa). Phosphothreonine is present on Thr-294. Ser-296 and Ser-299 each carry phosphoserine. Thr-303 carries the post-translational modification Phosphothreonine. Ser-345 is modified (phosphoserine). Phosphothreonine occurs at positions 348 and 350. The span at 359-373 shows a compositional bias: low complexity; that stretch reads SSSSTSAAMPHSSSA. Residues Ser-380, Ser-398, Ser-406, and Ser-409 each carry the phosphoserine modification. The residue at position 411 (Thr-411) is a Phosphothreonine. Phosphoserine is present on residues Ser-415, Ser-425, Ser-429, and Ser-432. A compositionally biased stretch (low complexity) spans 422 to 432; it reads SSGSRSSSLKS. Thr-436 carries the post-translational modification Phosphothreonine. Residues 442 to 478 show a composition bias toward polar residues; sequence QLQSIRSEGTTSTSYKSLANQTRNGSLSYDSLLTPSD. Phosphoserine is present on residues Ser-529 and Ser-554. A compositionally biased stretch (low complexity) spans 581 to 597; it reads PRTSSSSDDSKRSPLSK. Arg-617 carries the post-translational modification Omega-N-methylarginine. Ser-621 bears the Phosphoserine mark. Residue Thr-659 is modified to Phosphothreonine. Polar residues predominate over residues 666-677; that stretch reads LKTTYSKSNGQP. Ser-684 and Ser-694 each carry phosphoserine. Arg-697 is modified (omega-N-methylarginine).

This sequence belongs to the DHHC palmitoyltransferase family. ERF2/ZDHHC9 subfamily. Post-translationally, phosphorylation regulates association with endocytic proteins and its subcellular localization. Phosphorylation by LYN during fatty acid uptake leads to inactivation of the activity. In terms of processing, autopalmitoylated. Palmitoylation of the C-terminal tail regulates stimulation-dependent plasma membrane motility. As to expression, highly enriched in brain, detectable in liver and heart, and undetectable in most other tissues.

It is found in the cell membrane. The catalysed reaction is L-cysteinyl-[protein] + hexadecanoyl-CoA = S-hexadecanoyl-L-cysteinyl-[protein] + CoA. Palmitoyltransferase that catalyzes the addition of palmitate onto various protein substrates such as CTNND2, CD36, GSDMD, NLRP3, NOD1, NOD2, STAT3 and S1PR1 thus plays a role in various biological processes including cell adhesion, inflammation, fatty acid uptake, bacterial sensing or cardiac functions. Plays an important role in the regulation of synapse efficacy by mediating palmitoylation of delta-catenin/CTNND2, thereby increasing synaptic delivery and surface stabilization of alpha-amino-3-hydroxy-5-methyl-4-isoxazole propionic acid receptors (AMPARs). Under basal conditions, remains at the synaptic membrane through FYN-mediated phosphorylation that prevents association with endocytic proteins. Neuronal activity enhances the internalization and trafficking of DHHC5 from spines to dendritic shafts where it palmitoylates delta-catenin/CTNND2. Regulates cell adhesion at the plasma membrane by palmitoylating GOLGA7B and DSG2. Plays a role in innate immune response by mediating the palmitoylation of NOD1 and NOD2 and their proper recruitment to the bacterial entry site and phagosomes. Also participates in fatty acid uptake by palmitoylating CD36 and thereby targeting it to the plasma membrane. Upon binding of fatty acids to CD36, gets phosphorylated by LYN leading to inactivation and subsequent CD36 caveolar endocytosis. Controls oligodendrocyte development by catalyzing STAT3 palmitoylation. Acts as a regulator of inflammatory response by mediating palmitoylation of NLRP3 and GSDMD. Palmitoylates NLRP3 to promote inflammasome assembly and activation. Activates pyroptosis by catalyzing palmitoylation of gasdermin-D (GSDMD), thereby promoting membrane translocation and pore formation of GSDMD. This is Palmitoyltransferase ZDHHC5 (Zdhhc5) from Mus musculus (Mouse).